The sequence spans 390 residues: Galactokinase (390 aa).

33 to 36 lines the substrate pocket; it reads EHTD. Residues Ser67 and 124-130 contribute to the ATP site; that span reads GSGLSSS. Mg(2+) contacts are provided by Ser130 and Glu162. The active-site Proton acceptor is the Asp174. Tyr224 provides a ligand contact to substrate.

This sequence belongs to the GHMP kinase family. GalK subfamily.

The protein resides in the cytoplasm. The enzyme catalyses alpha-D-galactose + ATP = alpha-D-galactose 1-phosphate + ADP + H(+). The protein operates within carbohydrate metabolism; galactose metabolism. In terms of biological role, catalyzes the transfer of the gamma-phosphate of ATP to D-galactose to form alpha-D-galactose-1-phosphate (Gal-1-P). This chain is Galactokinase, found in Streptococcus mutans serotype c (strain ATCC 700610 / UA159).